Consider the following 281-residue polypeptide: uncharacterized protein (281 aa).

A run of 4 helical transmembrane segments spans residues 8 to 28 (ALPVVAIVALVASGVITFIWS), 97 to 117 (LAVALHGLGLSVLLFDYRGYG), 147 to 167 (PARIAYFGESLGAAVAVGLAV), and 210 to 230 (IASVHAPVLVIAGGSDDIVPA).

To S.pombe bem46 and yeast YNL320w.

It is found in the cell membrane. This is an uncharacterized protein from Mycobacterium tuberculosis (strain CDC 1551 / Oshkosh).